Here is a 257-residue protein sequence, read N- to C-terminus: Adenylate kinase (257 aa).

Residue 52 to 57 coordinates ATP; the sequence is GAGKGT. The segment at 72-101 is NMP; it reads ATGDMLRSQVAKKTELGKEAKKIMDQGGLV. AMP is bound by residues Thr73, Arg78, 99–101, 128–131, and Gln135; these read GLV and GFPR. The segment at 169–206 is LID; sequence GRLVHPASGRSYHKIFNPPKNEMLDDITGEPLIQRSDD. Residues Arg170 and 179–180 each bind ATP; that span reads SY. Positions 203 and 214 each coordinate AMP. Gln242 serves as a coordination point for ATP.

This sequence belongs to the adenylate kinase family. AK2 subfamily. Monomer.

The protein localises to the cytoplasm. The protein resides in the cytosol. It is found in the mitochondrion intermembrane space. It carries out the reaction AMP + ATP = 2 ADP. In terms of biological role, catalyzes the reversible transfer of the terminal phosphate group between ATP and AMP. Plays an important role in cellular energy homeostasis and in adenine nucleotide metabolism. Adenylate kinase activity is critical for regulation of the phosphate utilization and the AMP de novo biosynthesis pathways. This is Adenylate kinase (adk1) from Aspergillus clavatus (strain ATCC 1007 / CBS 513.65 / DSM 816 / NCTC 3887 / NRRL 1 / QM 1276 / 107).